Consider the following 204-residue polypeptide: ATP phosphoribosyltransferase (204 aa).

This sequence belongs to the ATP phosphoribosyltransferase family. Short subfamily. As to quaternary structure, heteromultimer composed of HisG and HisZ subunits.

The protein resides in the cytoplasm. The enzyme catalyses 1-(5-phospho-beta-D-ribosyl)-ATP + diphosphate = 5-phospho-alpha-D-ribose 1-diphosphate + ATP. It functions in the pathway amino-acid biosynthesis; L-histidine biosynthesis; L-histidine from 5-phospho-alpha-D-ribose 1-diphosphate: step 1/9. Functionally, catalyzes the condensation of ATP and 5-phosphoribose 1-diphosphate to form N'-(5'-phosphoribosyl)-ATP (PR-ATP). Has a crucial role in the pathway because the rate of histidine biosynthesis seems to be controlled primarily by regulation of HisG enzymatic activity. The protein is ATP phosphoribosyltransferase of Staphylococcus aureus (strain USA300).